A 53-amino-acid chain; its full sequence is Large ribosomal subunit protein bL32c (53 aa).

The protein belongs to the bacterial ribosomal protein bL32 family.

Its subcellular location is the plastid. The protein resides in the chloroplast. This chain is Large ribosomal subunit protein bL32c, found in Glycine max (Soybean).